Here is a 537-residue protein sequence, read N- to C-terminus: Cytochrome c oxidase subunit 1 (537 aa).

Residues 22–42 (ILYLLFGLVSGIIGSVFSFII) traverse the membrane as a helical segment. Positions 45, 48, and 50 each coordinate Ca(2+). Position 68 (His68) interacts with Fe(II)-heme a. The next 8 helical transmembrane spans lie at 70-90 (ILMI…NYLV), 104-124 (VNNF…ISAL), 152-172 (LAIL…VNLI), 190-210 (LFAW…PVLA), 241-261 (LFWF…FGVV), 279-299 (MLWA…HHLF), 318-338 (IAIP…GGAI), and 345-365 (MLYA…GVIL). His247 contributes to the Cu cation binding site. A cross-link (1'-histidyl-3'-tyrosine (His-Tyr)) is located at residues 247-251 (HPEVY). Tyr251 contacts O2. Cu cation-binding residues include His296 and His297. The Mg(2+) site is built by His375 and Asp376. Helical transmembrane passes span 379 to 399 (FVVA…LCGA) and 418 to 438 (IQFW…HFLG). A heme a3-binding site is contributed by His383. A Fe(II)-heme a-binding site is contributed by His385. Pro447 serves as a coordination point for Ca(2+). A helical membrane pass occupies residues 458–478 (FVSSIGSVISILSLFLFMYVM).

Belongs to the heme-copper respiratory oxidase family. As to quaternary structure, component of the cytochrome c oxidase (complex IV, CIV), a multisubunit enzyme composed of a catalytic core of 3 subunits and several supernumerary subunits. The complex exists as a monomer or a dimer and forms supercomplexes (SCs) in the inner mitochondrial membrane with ubiquinol-cytochrome c oxidoreductase (cytochrome b-c1 complex, complex III, CIII). The cofactor is heme. Cu cation is required as a cofactor.

The protein resides in the mitochondrion inner membrane. It carries out the reaction 4 Fe(II)-[cytochrome c] + O2 + 8 H(+)(in) = 4 Fe(III)-[cytochrome c] + 2 H2O + 4 H(+)(out). Its pathway is energy metabolism; oxidative phosphorylation. In terms of biological role, component of the cytochrome c oxidase, the last enzyme in the mitochondrial electron transport chain which drives oxidative phosphorylation. The respiratory chain contains 3 multisubunit complexes succinate dehydrogenase (complex II, CII), ubiquinol-cytochrome c oxidoreductase (cytochrome b-c1 complex, complex III, CIII) and cytochrome c oxidase (complex IV, CIV), that cooperate to transfer electrons derived from NADH and succinate to molecular oxygen, creating an electrochemical gradient over the inner membrane that drives transmembrane transport and the ATP synthase. Cytochrome c oxidase is the component of the respiratory chain that catalyzes the reduction of oxygen to water. Electrons originating from reduced cytochrome c in the intermembrane space (IMS) are transferred via the dinuclear copper A center (CU(A)) of subunit 2 and heme A of subunit 1 to the active site in subunit 1, a binuclear center (BNC) formed by heme A3 and copper B (CU(B)). The BNC reduces molecular oxygen to 2 water molecules using 4 electrons from cytochrome c in the IMS and 4 protons from the mitochondrial matrix. The polypeptide is Cytochrome c oxidase subunit 1 (cox1) (Schizosaccharomyces pombe (strain 972 / ATCC 24843) (Fission yeast)).